We begin with the raw amino-acid sequence, 467 residues long: MAQTLYDKLWDAHVVHQESDGTCLLYIDRHLLHEVTSPQAFEGLALAGRQPWRVGANLAVADHNVPTLNRAQGIEDPISRLQVDTLDDNCAKYGITEFRMNDLRQGIVHVIGPEQGATLPGMTVVCGDSHTSTHGALGALAFGIGTSEVEHVLATQTLLMKKAKSMQINVEGELPFGCTAKDVVLHIIGIIGTAGGTGHAIEFSGSTIRGLSVEGRMTVCNMAIEAGARSGMVAVDDKTIDYFRGRPFAPVGVLWDQAVGYWRTLHSDAGARFDRVINVDARDIKPQVTWGTSPEMVLPVDGRVPDPDREKDDVRRSGMERALEYMGLKPNTPLVDIRVDRVFIGSCTNSRIEDLRAAAVVARGKRVAANVRQAMVVPGSGLVKQQAEREGLDKIFIEAGFEWREPGCSMCLAMNADRLEPGERCASTSNRNFEGRQGQGGRTHLVSPAMAAAAAVAGHFVDVRSFR.

Residues Cys347, Cys408, and Cys411 each coordinate [4Fe-4S] cluster.

It belongs to the aconitase/IPM isomerase family. LeuC type 1 subfamily. In terms of assembly, heterodimer of LeuC and LeuD. It depends on [4Fe-4S] cluster as a cofactor.

It catalyses the reaction (2R,3S)-3-isopropylmalate = (2S)-2-isopropylmalate. Its pathway is amino-acid biosynthesis; L-leucine biosynthesis; L-leucine from 3-methyl-2-oxobutanoate: step 2/4. Functionally, catalyzes the isomerization between 2-isopropylmalate and 3-isopropylmalate, via the formation of 2-isopropylmaleate. This is 3-isopropylmalate dehydratase large subunit from Bordetella bronchiseptica (strain ATCC BAA-588 / NCTC 13252 / RB50) (Alcaligenes bronchisepticus).